The primary structure comprises 361 residues: Ribosomal RNA large subunit methyltransferase M (361 aa).

S-adenosyl-L-methionine contacts are provided by residues S187, 220 to 223, D239, D259, and D276; that span reads CPGG. K305 serves as the catalytic Proton acceptor.

Belongs to the class I-like SAM-binding methyltransferase superfamily. RNA methyltransferase RlmE family. RlmM subfamily. As to quaternary structure, monomer.

Its subcellular location is the cytoplasm. It catalyses the reaction cytidine(2498) in 23S rRNA + S-adenosyl-L-methionine = 2'-O-methylcytidine(2498) in 23S rRNA + S-adenosyl-L-homocysteine + H(+). Its function is as follows. Catalyzes the 2'-O-methylation at nucleotide C2498 in 23S rRNA. This Shewanella amazonensis (strain ATCC BAA-1098 / SB2B) protein is Ribosomal RNA large subunit methyltransferase M.